Consider the following 28-residue polypeptide: Glutathione S-transferase 5 (28 aa).

Residues 1 to 28 (PNYKLTYFNLRGRAEISRYLFAYAGIKY) form the GST N-terminal domain. Tyr7 contacts glutathione.

The protein belongs to the GST superfamily. Sigma family. In terms of assembly, homodimer.

The protein localises to the cytoplasm. It carries out the reaction RX + glutathione = an S-substituted glutathione + a halide anion + H(+). In terms of biological role, conjugation of reduced glutathione to a wide number of exogenous and endogenous hydrophobic electrophiles. The polypeptide is Glutathione S-transferase 5 (Gallus gallus (Chicken)).